Here is a 269-residue protein sequence, read N- to C-terminus: Chromosome-partitioning protein Spo0J (269 aa).

Residues 1 to 20 form a stimulates ATPase activity of Soj by 8% region; it reads MSRKPSGLGRGLEALLPKTG. The H-T-H motif DNA-binding region spans 137-156; the sequence is QEEVARRVGKARSTVANALR. The required for DNA-binding; may be responsible for dimerization stretch occupies residues 223-269; it reads PSPLSLELSRHLGLPVRVVGGKKGKVVIQYRSLEELEALLRRLGYQA.

This sequence belongs to the ParB family. In terms of assembly, homodimer, probably via the C-terminal 46 residues. Dimerization of the N-terminal H-T-H region may require DNA-binding. Probably interacts with ATPase Soj.

In terms of biological role, probably involved in chromosome partitioning. Binds to a plasmid centromere-like site parS. Stimulates the ATPase activity 10-fold of Soj; the first 20 residues may be responsible. In Thermus thermophilus (strain ATCC BAA-163 / DSM 7039 / HB27), this protein is Chromosome-partitioning protein Spo0J (spo0C).